Reading from the N-terminus, the 708-residue chain is Leukotoxin translocation ATP-binding protein LktB (708 aa).

A Peptidase C39 domain is found at 1-126; that stretch reads MEANHQRNDL…ACYQGQLILV (126 aa). The 283-residue stretch at 155–437 folds into the ABC transmembrane type-1 domain; the sequence is FLETLIVSIF…LAQLWQDFQQ (283 aa). 5 helical membrane-spanning segments follow: residues 159-179, 192-212, 270-290, 296-316, and 389-409; these read LIVSIFLQIFALITPLFFQVV, LNIITVALAIVIIFEIVLSGL, ALTSVLDLLFSFIFFAVMWYY, LVILGSLPCYILWSIFISPIL, and VMVINLWLGAHLVISGDLSIG. Residues 469–704 enclose the ABC transporter domain; the sequence is ISFKNIRFRY…SNGLYSYLHQ (236 aa). ATP is bound at residue 503–510; it reads GRSGSGKS.

This sequence belongs to the ABC transporter superfamily. Protein-1 exporter (TC 3.A.1.109) family. As to quaternary structure, homodimer.

The protein localises to the cell inner membrane. It catalyses the reaction ATP + H2O + proteinSide 1 = ADP + phosphate + proteinSide 2.. Its function is as follows. Part of the ABC transporter complex LktBD involved in leukotoxin export. Transmembrane domains (TMD) form a pore in the inner membrane and the ATP-binding domain (NBD) is responsible for energy generation. The polypeptide is Leukotoxin translocation ATP-binding protein LktB (lktB) (Mannheimia haemolytica (Pasteurella haemolytica)).